The sequence spans 430 residues: Glutamate-1-semialdehyde 2,1-aminomutase (430 aa).

Lys267 is subject to N6-(pyridoxal phosphate)lysine.

The protein belongs to the class-III pyridoxal-phosphate-dependent aminotransferase family. HemL subfamily. In terms of assembly, homodimer. Requires pyridoxal 5'-phosphate as cofactor.

It localises to the cytoplasm. It carries out the reaction (S)-4-amino-5-oxopentanoate = 5-aminolevulinate. The protein operates within porphyrin-containing compound metabolism; protoporphyrin-IX biosynthesis; 5-aminolevulinate from L-glutamyl-tRNA(Glu): step 2/2. This chain is Glutamate-1-semialdehyde 2,1-aminomutase, found in Sulfurovum sp. (strain NBC37-1).